A 190-amino-acid chain; its full sequence is Copper-binding lipoprotein NosL (190 aa).

Positions 1 to 23 (MNALHRIGAGTLLAVLLAFGLTG) are cleaved as a signal peptide. C24 carries the N-palmitoyl cysteine lipid modification. C24 carries the S-diacylglycerol cysteine lipid modification. The disordered stretch occupies residues 170-190 (MQHGGMHDHAPNGAHNAHAGH). A compositionally biased stretch (low complexity) spans 180-190 (PNGAHNAHAGH).

Belongs to the NosL family. In terms of assembly, monomer.

It is found in the cell membrane. In terms of biological role, may act as a metallochaperone involved in nitrous oxide reductase assembly. Specifically binds Cu(+). This Stutzerimonas stutzeri (Pseudomonas stutzeri) protein is Copper-binding lipoprotein NosL.